Consider the following 160-residue polypeptide: Ribosomal RNA large subunit methyltransferase H (160 aa).

S-adenosyl-L-methionine contacts are provided by residues leucine 77, glycine 109, and 128–133; that span reads LSNLTF.

It belongs to the RNA methyltransferase RlmH family. In terms of assembly, homodimer.

It localises to the cytoplasm. It carries out the reaction pseudouridine(1915) in 23S rRNA + S-adenosyl-L-methionine = N(3)-methylpseudouridine(1915) in 23S rRNA + S-adenosyl-L-homocysteine + H(+). Functionally, specifically methylates the pseudouridine at position 1915 (m3Psi1915) in 23S rRNA. In Desulforamulus reducens (strain ATCC BAA-1160 / DSM 100696 / MI-1) (Desulfotomaculum reducens), this protein is Ribosomal RNA large subunit methyltransferase H.